The chain runs to 164 residues: CB1 cannabinoid receptor-interacting protein 1 (164 aa).

It belongs to the CNRIP family. Interacts with the cannabinoid receptor CNR1 (via C-terminus). Does not interact with cannabinoid receptor CNR2.

Functionally, suppresses cannabinoid receptor CNR1-mediated tonic inhibition of voltage-gated calcium channels. The polypeptide is CB1 cannabinoid receptor-interacting protein 1 (CNRIP1) (Bos taurus (Bovine)).